Here is an 86-residue protein sequence, read N- to C-terminus: Small ribosomal subunit protein bS18 (86 aa).

The tract at residues 1-20 (MSREEGNNGRRPGGKMRRSR) is disordered.

This sequence belongs to the bacterial ribosomal protein bS18 family. As to quaternary structure, part of the 30S ribosomal subunit. Forms a tight heterodimer with protein bS6.

In terms of biological role, binds as a heterodimer with protein bS6 to the central domain of the 16S rRNA, where it helps stabilize the platform of the 30S subunit. The polypeptide is Small ribosomal subunit protein bS18 (Clostridium beijerinckii (strain ATCC 51743 / NCIMB 8052) (Clostridium acetobutylicum)).